The sequence spans 214 residues: Zinc finger protein 11 (214 aa).

Residues 1–27 (MKRTHLASFSNRDKTQEEEGEDGNGDN) are disordered. Residues 49–71 (YTCSFCRREFRSAQALGGHMNVH) form a C2H2-type zinc finger. A Nuclear localization signal motif is present at residues 72-79 (RRDRAKLR). Residues 89–130 (HHHTPIANPNPNFSSSSSSSTTTAHLEPSLTNQRSKTTPFPS) are disordered. A compositionally biased stretch (low complexity) spans 102 to 111 (SSSSSSSTTT). Residues 117-128 (SLTNQRSKTTPF) are compositionally biased toward polar residues.

Expressed in roots, stems, axillary buds and flowers.

The protein resides in the nucleus. In terms of biological role, probable transcription factor that may regulate cell division and growth. This chain is Zinc finger protein 11, found in Arabidopsis thaliana (Mouse-ear cress).